The following is an 858-amino-acid chain: Leucine--tRNA ligase (858 aa).

The 'HIGH' region signature appears at 42 to 52 (PYPSGRLHMGH). The short motif at 618–622 (KMSKS) is the 'KMSKS' region element. Position 621 (K621) interacts with ATP.

This sequence belongs to the class-I aminoacyl-tRNA synthetase family.

It localises to the cytoplasm. It carries out the reaction tRNA(Leu) + L-leucine + ATP = L-leucyl-tRNA(Leu) + AMP + diphosphate. The sequence is that of Leucine--tRNA ligase from Photobacterium profundum (strain SS9).